The sequence spans 142 residues: Small heat shock protein IbpB (142 aa).

One can recognise a sHSP domain in the interval 26–137 (AGEGQSFPPY…AAQRIAISER (112 aa)).

This sequence belongs to the small heat shock protein (HSP20) family. Homodimer. Forms homomultimers of about 100-150 subunits at optimal growth temperatures. Conformation changes to oligomers at high temperatures or high ionic concentrations. The decrease in size of the multimers is accompanied by an increase in chaperone activity.

The protein localises to the cytoplasm. Functionally, associates with aggregated proteins, together with IbpA, to stabilize and protect them from irreversible denaturation and extensive proteolysis during heat shock and oxidative stress. Aggregated proteins bound to the IbpAB complex are more efficiently refolded and reactivated by the ATP-dependent chaperone systems ClpB and DnaK/DnaJ/GrpE. Its activity is ATP-independent. In Shigella boydii serotype 18 (strain CDC 3083-94 / BS512), this protein is Small heat shock protein IbpB.